Consider the following 217-residue polypeptide: Probable transaldolase (217 aa).

K83 functions as the Schiff-base intermediate with substrate in the catalytic mechanism.

Belongs to the transaldolase family. Type 3B subfamily.

It localises to the cytoplasm. It carries out the reaction D-sedoheptulose 7-phosphate + D-glyceraldehyde 3-phosphate = D-erythrose 4-phosphate + beta-D-fructose 6-phosphate. It participates in carbohydrate degradation; pentose phosphate pathway; D-glyceraldehyde 3-phosphate and beta-D-fructose 6-phosphate from D-ribose 5-phosphate and D-xylulose 5-phosphate (non-oxidative stage): step 2/3. Functionally, transaldolase is important for the balance of metabolites in the pentose-phosphate pathway. In Rhizorhabdus wittichii (strain DSM 6014 / CCUG 31198 / JCM 15750 / NBRC 105917 / EY 4224 / RW1) (Sphingomonas wittichii), this protein is Probable transaldolase.